The sequence spans 618 residues: Membrane protein insertase YidC (618 aa).

A run of 6 helical transmembrane segments spans residues lysine 3–serine 23, tryptophan 363–phenylalanine 383, leucine 439–isoleucine 459, phenylalanine 478–leucine 498, proline 520–leucine 540, and serine 545–leucine 565.

The protein belongs to the OXA1/ALB3/YidC family. Type 1 subfamily. As to quaternary structure, interacts with the Sec translocase complex via SecD. Specifically interacts with transmembrane segments of nascent integral membrane proteins during membrane integration.

It localises to the cell inner membrane. Functionally, required for the insertion and/or proper folding and/or complex formation of integral membrane proteins into the membrane. Involved in integration of membrane proteins that insert both dependently and independently of the Sec translocase complex, as well as at least some lipoproteins. Aids folding of multispanning membrane proteins. This chain is Membrane protein insertase YidC, found in Bacteroides fragilis (strain ATCC 25285 / DSM 2151 / CCUG 4856 / JCM 11019 / LMG 10263 / NCTC 9343 / Onslow / VPI 2553 / EN-2).